A 523-amino-acid polypeptide reads, in one-letter code: Histidine ammonia-lyase (523 aa).

A cross-link (5-imidazolinone (Ala-Gly)) is located at residues 148–150 (ASG). 2,3-didehydroalanine (Ser) is present on S149.

The protein belongs to the PAL/histidase family. Post-translationally, contains an active site 4-methylidene-imidazol-5-one (MIO), which is formed autocatalytically by cyclization and dehydration of residues Ala-Ser-Gly.

The protein localises to the cytoplasm. It carries out the reaction L-histidine = trans-urocanate + NH4(+). The protein operates within amino-acid degradation; L-histidine degradation into L-glutamate; N-formimidoyl-L-glutamate from L-histidine: step 1/3. The polypeptide is Histidine ammonia-lyase (Chloroflexus aurantiacus (strain ATCC 29366 / DSM 635 / J-10-fl)).